We begin with the raw amino-acid sequence, 778 residues long: E3 UFM1-protein ligase 1 homolog (778 aa).

The tract at residues 404–477 (NNLSTSHDAD…TVQQSAGNTR (74 aa)) is disordered. The span at 445–457 (KSTKKHQRGRAAA) shows a compositional bias: basic residues.

It belongs to the UFL1 family.

In terms of biological role, E3 UFM1-protein ligase that mediates ufmylation of target proteins. This is E3 UFM1-protein ligase 1 homolog from Drosophila virilis (Fruit fly).